Consider the following 41-residue polypeptide: Large ribosomal subunit protein bL36 (41 aa).

It belongs to the bacterial ribosomal protein bL36 family.

This is Large ribosomal subunit protein bL36 from Rhizobium etli (strain CIAT 652).